The primary structure comprises 150 residues: Arginine repressor (150 aa).

It belongs to the ArgR family.

Its subcellular location is the cytoplasm. It functions in the pathway amino-acid biosynthesis; L-arginine biosynthesis [regulation]. Functionally, regulates arginine biosynthesis genes. In Staphylococcus aureus (strain Mu3 / ATCC 700698), this protein is Arginine repressor.